A 688-amino-acid chain; its full sequence is Protein sel-1 homolog 2 (688 aa).

A signal peptide spans 1–18; sequence MNPLALLVEILIIIEVTT. The Extracellular portion of the chain corresponds to 19–662; it reads KNSEAERYNR…KWKWLKLDST (644 aa). An N-linked (GlcNAc...) asparagine glycan is attached at Asn34. Sel1-like repeat units follow at residues 107–142, 143–178, 179–214, 215–250, 297–333, 334–370, 371–406, 407–442, 443–478, 551–586, and 588–623; these read GDEL…DMGN, LKAM…KEGS, YKAQ…AGGS, MMSQ…DYIA, VQIQ…KAGS, ANAM…SKGN, AIGL…EKGW, PNAQ…QSGQ, PLAI…ELGH, AFAR…DKHH, and AQAM…QTSP. Residue Asn162 is glycosylated (N-linked (GlcNAc...) asparagine). A helical transmembrane segment spans residues 663 to 683; that stretch reads IGPYWDLLVIGLIVVVLIFLL. Topologically, residues 684–688 are cytoplasmic; sequence RNHHR.

The protein belongs to the sel-1 family.

Its subcellular location is the membrane. The protein resides in the cell projection. It localises to the cilium. It is found in the nucleus speckle. The protein is Protein sel-1 homolog 2 (Sel1l2) of Rattus norvegicus (Rat).